We begin with the raw amino-acid sequence, 307 residues long: Glycerol-3-phosphate dehydrogenase [NAD(P)+] (307 aa).

Residues F11, R31, and K95 each coordinate NADPH. Residues K95, G121, and S123 each coordinate sn-glycerol 3-phosphate. A125 serves as a coordination point for NADPH. Positions 176, 229, 239, 240, and 241 each coordinate sn-glycerol 3-phosphate. The active-site Proton acceptor is the K176. R240 serves as a coordination point for NADPH. E261 provides a ligand contact to NADPH.

This sequence belongs to the NAD-dependent glycerol-3-phosphate dehydrogenase family.

Its subcellular location is the cytoplasm. The catalysed reaction is sn-glycerol 3-phosphate + NAD(+) = dihydroxyacetone phosphate + NADH + H(+). The enzyme catalyses sn-glycerol 3-phosphate + NADP(+) = dihydroxyacetone phosphate + NADPH + H(+). Its pathway is membrane lipid metabolism; glycerophospholipid metabolism. In terms of biological role, catalyzes the reduction of the glycolytic intermediate dihydroxyacetone phosphate (DHAP) to sn-glycerol 3-phosphate (G3P), the key precursor for phospholipid synthesis. This is Glycerol-3-phosphate dehydrogenase [NAD(P)+] from Jannaschia sp. (strain CCS1).